A 197-amino-acid chain; its full sequence is MSNNEIVFVTGNANKLKEVQSILTQEVDNNNKTIHLINEALDLEELQDTDLNAIALAKGKQAVAALGKGKPVFVEDTALRFDEFNGLPGAYIKWFLKSMGLEKIVKMLEPFENKNAEAVTTICFADSRGEYHFFQGITRGKIVPSRGPTTFGWDSIFEPFDSHGLTYAEMSKDAKNAISHRGKAFAQFKEYLYQNDF.

An ITP-binding site is contributed by 10–15; the sequence is TGNANK. Mg(2+) is bound at residue Glu45. ITP-binding positions include Lys58, 76 to 77, Lys93, 151 to 154, Lys175, and 180 to 181; these read DT, FGWD, and HR.

This sequence belongs to the HAM1 NTPase family. In terms of assembly, homodimer. The cofactor is Mg(2+). Mn(2+) serves as cofactor.

Its subcellular location is the cytoplasm. The protein localises to the nucleus. The catalysed reaction is ITP + H2O = IMP + diphosphate + H(+). It catalyses the reaction dITP + H2O = dIMP + diphosphate + H(+). It carries out the reaction XTP + H2O = XMP + diphosphate + H(+). The enzyme catalyses N(6)-hydroxy-dATP + H2O = N(6)-hydroxy-dAMP + diphosphate + H(+). Functionally, pyrophosphatase that hydrolyzes the non-canonical purine nucleotides inosine triphosphate (ITP), deoxyinosine triphosphate (dITP) as well as 2'-deoxy-N-6-hydroxylaminopurine triphosphate (dHAPTP) and 5-bromodeoxyuridine 5'-triphosphate (BrdUTP) to their respective monophosphate derivatives. Xanthosine 5'-triphosphate (XTP) is also a potential substrate. The enzyme does not distinguish between the deoxy- and ribose forms. Probably excludes non-canonical purines from RNA and DNA precursor pools, thus preventing their incorporation into RNA and DNA and avoiding chromosomal lesions. In Saccharomyces cerevisiae (strain ATCC 204508 / S288c) (Baker's yeast), this protein is Inosine triphosphate pyrophosphatase.